The primary structure comprises 67 residues: uncharacterized protein (67 aa).

This is an uncharacterized protein from Saccharomyces cerevisiae (strain ATCC 204508 / S288c) (Baker's yeast).